Consider the following 284-residue polypeptide: 4-hydroxybenzoate octaprenyltransferase (284 aa).

9 helical membrane-spanning segments follow: residues 19 to 39, 42 to 62, 85 to 105, 107 to 127, 134 to 154, 165 to 185, 211 to 231, 233 to 253, and 261 to 281; these read IPIL…SHGL, ISYL…GCII, GQLS…VAFI, VLFL…LAIL, FFAI…FMAF, AWIF…IYAL, ILLF…YCDF, SFFY…YFLY, and CINA…MAVI.

Belongs to the UbiA prenyltransferase family. Mg(2+) is required as a cofactor.

It localises to the cell inner membrane. The enzyme catalyses all-trans-octaprenyl diphosphate + 4-hydroxybenzoate = 4-hydroxy-3-(all-trans-octaprenyl)benzoate + diphosphate. It functions in the pathway cofactor biosynthesis; ubiquinone biosynthesis. Its function is as follows. Catalyzes the prenylation of para-hydroxybenzoate (PHB) with an all-trans polyprenyl group. Mediates the second step in the final reaction sequence of ubiquinone-8 (UQ-8) biosynthesis, which is the condensation of the polyisoprenoid side chain with PHB, generating the first membrane-bound Q intermediate 3-octaprenyl-4-hydroxybenzoate. The chain is 4-hydroxybenzoate octaprenyltransferase from Francisella tularensis subsp. novicida (strain U112).